Consider the following 298-residue polypeptide: MSLFELILLAPVDEIETLSEALDALDALSVSVEDADAQTPAEQALFGEPGMPPPKAGWERSRVVSLFASEALARDAASVLTAQDFFAGCQLVAIQAVPEQDWVRLTQSQFTPVEITPEFWIVPTWHEPPEQAKQLIRLDPGLAFGTGTHPTTRMCLRWIAGQGAANKPLARVLDYGCGSGILAIGAAKFGAVDIDAVDIDEAAVESTRANAEANHVTLNAGLPDKAVGAYQTVLANILATPLKVLAPLLCSHVQKGGSLVLAGILERQADELKAAYQPYCQLQVLDQEEGWILMGARF.

Positions 152, 176, 198, and 236 each coordinate S-adenosyl-L-methionine.

This sequence belongs to the methyltransferase superfamily. PrmA family.

The protein resides in the cytoplasm. It catalyses the reaction L-lysyl-[protein] + 3 S-adenosyl-L-methionine = N(6),N(6),N(6)-trimethyl-L-lysyl-[protein] + 3 S-adenosyl-L-homocysteine + 3 H(+). Functionally, methylates ribosomal protein L11. This chain is Ribosomal protein L11 methyltransferase, found in Polaromonas sp. (strain JS666 / ATCC BAA-500).